The following is a 60-amino-acid chain: MAVQQNKKTPSKRGMHRSHDFLVAPQLSVEQTTGETHMRHHISPNGFYRGRKVLKTKNDE.

Residues 1–60 (MAVQQNKKTPSKRGMHRSHDFLVAPQLSVEQTTGETHMRHHISPNGFYRGRKVLKTKNDE) are disordered. The span at 49–60 (RGRKVLKTKNDE) shows a compositional bias: basic residues.

Belongs to the bacterial ribosomal protein bL32 family.

The polypeptide is Large ribosomal subunit protein bL32 (Herminiimonas arsenicoxydans).